Reading from the N-terminus, the 535-residue chain is Beta-amylase (535 aa).

Positions 1 to 2 (ME) are cleaved as a propeptide — removed in mature form. Residue Val3 is modified to N-acetylvaline. Residues Asp51, His91, and Asp99 each contribute to the substrate site. The active-site Proton donor is Glu184. Residues Lys293, His298, and Thr340 each coordinate substrate. Glu378 acts as the Proton acceptor in catalysis. Residues 379–380 (NA) and Arg418 each bind substrate. 3 consecutive repeat copies span residues 489–499 (GPTGGMGGQAE), 500–510 (GPTCGMGGQVK), and 511–521 (GPTGGMGGQAE). The 4 X 11 AA tandem repeats stretch occupies residues 489-532 (GPTGGMGGQAEGPTCGMGGQVKGPTGGMGGQAEDPTSGMGGELP). A propeptide spans 490–535 (PTGGMGGQAEGPTCGMGGQVKGPTGGMGGQAEDPTSGMGGELPATM) (removed in mature form). Residues 513–535 (TGGMGGQAEDPTSGMGGELPATM) form a disordered region. The 4; approximate repeat unit spans residues 522 to 532 (DPTSGMGGELP).

This sequence belongs to the glycosyl hydrolase 14 family. Monomer. Endosperm.

The catalysed reaction is Hydrolysis of (1-&gt;4)-alpha-D-glucosidic linkages in polysaccharides so as to remove successive maltose units from the non-reducing ends of the chains.. Functionally, catalyzes the liberation of maltose from 1,4-alpha-D glucans. The polypeptide is Beta-amylase (Hordeum vulgare subsp. spontaneum (Wild barley)).